The primary structure comprises 1761 residues: 6-methylsalicylic acid synthase AOL_s00215g283 (1761 aa).

Residues 18-443 enclose the Ketosynthase family 3 (KS3) domain; it reads QDDIAIIGMA…GTVAHAVIEQ (426 aa). Catalysis depends on for beta-ketoacyl synthase activity residues Cys-190, His-325, and His-367. The segment at 554–870 is malonyl-CoA:ACP transacylase (MAT) domain; it reads VWVFSGHGAH…ALGKLHCHGA (317 aa). The For malonyltransferase activity role is filled by Ser-641. The N-terminal hotdog fold stretch occupies residues 918–1038; sequence HVLLGAKHQV…GHVANNEWSK (121 aa). Positions 918 to 1187 are dehydratase (DH) domain; sequence HVLLGAKHQV…NGMRFSAVEG (270 aa). Residues 918–1191 enclose the PKS/mFAS DH domain; that stretch reads HVLLGAKHQV…FSAVEGTPGA (274 aa). Residue His-950 is the Proton acceptor; for dehydratase activity of the active site. Residues 1050-1191 are C-terminal hotdog fold; it reads LPSVKPSFAT…FSAVEGTPGA (142 aa). Asp-1113 serves as the catalytic Proton donor; for dehydratase activity. Residues 1399-1587 are ketoreductase (KR) domain; sequence GTYLITGGLG…IVSFLWTSWN (189 aa). The interval 1654–1680 is disordered; the sequence is PRKRAESSGTEAVSKGEVSEKAPVPKS. The region spanning 1686–1761 is the Carrier domain; the sequence is EYLQNAISEC…HLVKWFEEKI (76 aa). Ser-1721 is modified (O-(pantetheine 4'-phosphoryl)serine).

It catalyses the reaction 3 malonyl-CoA + acetyl-CoA + NADPH + 3 H(+) = 6-methylsalicylate + 3 CO2 + NADP(+) + 4 CoA + H2O. The protein operates within secondary metabolite biosynthesis; terpenoid biosynthesis. 6-methylsalicylic acid synthase; part of the gene cluster that mediates the biosynthesis of sesquiterpenyl epoxy-cyclohexenoids (SECs) such as anthrobotrisins and arthrosporols, metabolites that possess a novel hybrid carbon skeleton consisting of a polyketide-derived epoxycyclohexenol combined with a terpenoid-derived monocyclic sesquiterpenol substructure (PKS-PTS hybrid). The SEC pathway plays an important role for fungal soil colonization via decreasing fungal nematode-capturing ability. Within the pathway, the polyketide synthase (PKS) AOL_s00215g283 catalyzes the biosynthesis of 6-methylsalicylic acid (6-MSA) via condensation of 1 acetate and 3 malonate units. AOL_s00215g283 performs a series of programmed reactions including Claisen condensation, dehydration, reduction, and cyclization to yield 6-MSA. The pathway begins with the biosynthesis of 6-methylsalicylic acid (6-MSA), the first precursor of the polyketide-derived epoxycyclohexenol in arthrosporols, by the polyketide synthase (PKS) AOL_s00215g283. The 6-methylsalicylic acid decarboxylase AOL_s00215g281 then catalyzes the decarboxylation of 6-methylsalicylic acid to yield m-cresol. The cytochrome P450 monooxygenase AOL_s00215g282 further oxidizes m-cresol to yield toluquinol. With the assistance of the oxidoreductase AOL_s00215g277, the polyprenyl transferase AOL_s00215g276 catalyzes the farnesylation of toluquinol to produce farnesyl hydroquinone, the hybrid precursor for biosynthesis of SECs. Farnesyl hydroquinone undergoes epoxidation and then subsequent dehydrogenation to form farnesyl epoxy-quinone, the first and simplest SEC. The cytochrome P450 monooxygenase AOL_s00215g278 and the FAD-dependent monooxygenase AOL_s00215g279 might be involved in the oxygenation of the phenol moiety, most likely in the epoxy formation. The cytochrome P450 monooxygenases AOL_s00215g274 and AOL_s00215g280 are involved in specific regional ketone reductions at respectively C-4 and C-1 of farnesyl epoxy-quinone PubMed:33823587. The sequence is that of 6-methylsalicylic acid synthase AOL_s00215g283 from Arthrobotrys oligospora (strain ATCC 24927 / CBS 115.81 / DSM 1491) (Nematode-trapping fungus).